The following is a 62-amino-acid chain: Mastoparan-AF (62 aa).

The N-terminal stretch at 1-25 is a signal peptide; the sequence is MKNTILILFTAFIALLGFFGMSAEA. AXPX repeat units lie at residues 25-28, 29-32, 33-36, and 43-46; these read ADPI and ADPE. A propeptide spanning residues 26 to 47 is cleaved from the precursor; that stretch reads DPIADPIADPISGPNAEADPEA. F61 bears the Phenylalanine amide mark.

This sequence belongs to the MCD family. Mastoparan subfamily. Expressed by the venom gland.

It is found in the secreted. Its subcellular location is the target cell membrane. Its function is as follows. Antimicrobial and mast cell degranulating peptide. Has broad spectrum antibacterial activity against both Gram-positive and Gram-negative bacteria (S.aureus MIC=16-32 ug/ml, S.xylosus MIC=1.5 ug/ml, S.alactolyticus MIC=8 ug/ml, C.koseri MIC=4 ug/ml, E.coli MIC=4-32 ug/ml, K.pneumoniae MIC=32 ug/ml, P.aerugiosa MIC=96 ug/ml, S.choleraesuis MIC=16 ug/ml, S.typhimurium MIC=32 ug/ml, V.parahamelytics MIC=16 ug/ml). Is also active on multi-antibiotic resistant hemolytic E.coli O157:H7. Acts by affecting membrane permeability. On E.coli O157:H7, acts through multiple membrane disruption patterns, including large perforations (full opening) at apical ends (hollow tubes), vesicle budding, forming dents, and membrane corrugation and invagination leading to irregular pits or pores. Exerts 40% lower membrane permeabilization activities on E.coli O157:H7 than on the non-pathogen E.coli BL21. Shows little hemolytic activities on sheep, chicken and human erythrocytes, but with a higher activity on chicken erythrocytes. Its mast cell degranulation activity may be related to the activation of G-protein coupled receptors in mast cells as well as interaction with other proteins located in cell endosomal membranes in the mast cells. This Vespa affinis (Lesser banded hornet) protein is Mastoparan-AF.